A 445-amino-acid chain; its full sequence is Glucose-6-phosphate isomerase 2 (445 aa).

The active-site Proton donor is E285. Residues H306 and K420 contribute to the active site.

Belongs to the GPI family. In terms of assembly, homodimer.

Its subcellular location is the cytoplasm. The catalysed reaction is alpha-D-glucose 6-phosphate = beta-D-fructose 6-phosphate. Its pathway is carbohydrate biosynthesis; gluconeogenesis. It participates in carbohydrate degradation; glycolysis; D-glyceraldehyde 3-phosphate and glycerone phosphate from D-glucose: step 2/4. Functionally, catalyzes the reversible isomerization of glucose-6-phosphate to fructose-6-phosphate. This Geobacillus stearothermophilus (Bacillus stearothermophilus) protein is Glucose-6-phosphate isomerase 2.